A 58-amino-acid polypeptide reads, in one-letter code: Small ribosomal subunit protein bS21 (58 aa).

The interval 35-58 is disordered; sequence REHYEKPSVKRKKKSEAARKRKFK. Positions 43-58 are enriched in basic residues; it reads VKRKKKSEAARKRKFK.

Belongs to the bacterial ribosomal protein bS21 family.

The sequence is that of Small ribosomal subunit protein bS21 from Ruminiclostridium cellulolyticum (strain ATCC 35319 / DSM 5812 / JCM 6584 / H10) (Clostridium cellulolyticum).